The sequence spans 726 residues: NHL repeat-containing protein 2 (726 aa).

6 NHL repeats span residues 212–254 (KLYK…VWKN), 265–307 (NPGR…IDLE), 335–369 (ISSP…IWAL), 409–439 (FAQP…VRTV), 461–505 (AFGD…VDPK), and 518–562 (ASNM…LDLE).

Monomer.

It localises to the cytoplasm. The protein localises to the cytosol. Functionally, required for normal embryonic development. This Bos taurus (Bovine) protein is NHL repeat-containing protein 2 (NHLRC2).